The chain runs to 394 residues: Elongation factor Tu 2 (394 aa).

Residues 10-204 (KPHVNVGTIG…ALDNYIPEPE (195 aa)) enclose the tr-type G domain. The interval 19–26 (GHVDHGKT) is G1. Residue 19–26 (GHVDHGKT) coordinates GTP. Thr-26 provides a ligand contact to Mg(2+). Residues 60 to 64 (GITIS) are G2. The segment at 81–84 (DCPG) is G3. GTP contacts are provided by residues 81 to 85 (DCPGH) and 136 to 139 (NKCD). Residues 136 to 139 (NKCD) form a G4 region. Residues 174–176 (SAL) are G5.

The protein belongs to the TRAFAC class translation factor GTPase superfamily. Classic translation factor GTPase family. EF-Tu/EF-1A subfamily. In terms of assembly, monomer.

Its subcellular location is the cytoplasm. The enzyme catalyses GTP + H2O = GDP + phosphate + H(+). Its function is as follows. GTP hydrolase that promotes the GTP-dependent binding of aminoacyl-tRNA to the A-site of ribosomes during protein biosynthesis. The sequence is that of Elongation factor Tu 2 from Photobacterium profundum (strain SS9).